The following is a 414-amino-acid chain: L-cysteine:1D-myo-inositol 2-amino-2-deoxy-alpha-D-glucopyranoside ligase (414 aa).

A Zn(2+)-binding site is contributed by Cys-44. L-cysteinyl-5'-AMP-binding positions include 44 to 47 (CGIT), Thr-59, and 82 to 84 (NIT). The 'HIGH' region motif lies at 46–56 (ITPYDSTHLGH). The 'ERGGDP' region signature appears at 188 to 193 (ERGGDP). Trp-228 serves as a coordination point for L-cysteinyl-5'-AMP. Zn(2+) is bound at residue Cys-232. 250–252 (GSD) is a binding site for L-cysteinyl-5'-AMP. A Zn(2+)-binding site is contributed by His-257. Ile-284 lines the L-cysteinyl-5'-AMP pocket. A 'KMSKS' region motif is present at residues 290–294 (KMSKS).

This sequence belongs to the class-I aminoacyl-tRNA synthetase family. MshC subfamily. As to quaternary structure, monomer. Zn(2+) is required as a cofactor.

The catalysed reaction is 1D-myo-inositol 2-amino-2-deoxy-alpha-D-glucopyranoside + L-cysteine + ATP = 1D-myo-inositol 2-(L-cysteinylamino)-2-deoxy-alpha-D-glucopyranoside + AMP + diphosphate + H(+). Functionally, catalyzes the ATP-dependent condensation of GlcN-Ins and L-cysteine to form L-Cys-GlcN-Ins. This chain is L-cysteine:1D-myo-inositol 2-amino-2-deoxy-alpha-D-glucopyranoside ligase, found in Corynebacterium aurimucosum (strain ATCC 700975 / DSM 44827 / CIP 107346 / CN-1) (Corynebacterium nigricans).